We begin with the raw amino-acid sequence, 161 residues long: Phosphopantetheine adenylyltransferase (161 aa).

Threonine 10 serves as a coordination point for substrate. Residues 10–11 (TF) and histidine 18 contribute to the ATP site. Substrate contacts are provided by lysine 42, methionine 74, and arginine 88. Residues 89 to 91 (GLR), glutamate 99, and 124 to 130 (WSFISSS) each bind ATP.

This sequence belongs to the bacterial CoaD family. As to quaternary structure, homohexamer. Requires Mg(2+) as cofactor.

It localises to the cytoplasm. The catalysed reaction is (R)-4'-phosphopantetheine + ATP + H(+) = 3'-dephospho-CoA + diphosphate. Its pathway is cofactor biosynthesis; coenzyme A biosynthesis; CoA from (R)-pantothenate: step 4/5. In terms of biological role, reversibly transfers an adenylyl group from ATP to 4'-phosphopantetheine, yielding dephospho-CoA (dPCoA) and pyrophosphate. The sequence is that of Phosphopantetheine adenylyltransferase from Serratia marcescens.